We begin with the raw amino-acid sequence, 277 residues long: Venom serine protease (277 aa).

The signal sequence occupies residues 1 to 19 (MNCGKIILLFITIIGVAKS). One can recognise a Peptidase S1 domain in the interval 34–269 (IVNGVETEIN…FMEFIHNATI (236 aa)). The cysteines at positions 60 and 76 are disulfide-linked. Catalysis depends on H75, which acts as the Charge relay system. N-linked (GlcNAc...) asparagine glycans are attached at residues N84 and N104. D126 functions as the Charge relay system in the catalytic mechanism. Residues N155 and N158 are each glycosylated (N-linked (GlcNAc...) asparagine). 2 cysteine pairs are disulfide-bonded: C192–C207 and C216–C246. Residue N218 is glycosylated (N-linked (GlcNAc...) asparagine). The active-site Charge relay system is the S220. An N-linked (GlcNAc...) asparagine glycan is attached at N266.

This sequence belongs to the peptidase S1 family. As to expression, expressed by the venom duct.

The protein resides in the secreted. This chain is Venom serine protease, found in Polistes dominula (European paper wasp).